Reading from the N-terminus, the 421-residue chain is Testin (421 aa).

Positions 92 to 199 (MILTNPVAAK…GDVKLPCEMD (108 aa)) constitute a PET domain. 3 LIM zinc-binding domains span residues 234 to 297 (YSCY…CDSE), 299 to 359 (PRCA…NHAV), and 362 to 421 (QGCH…KRMS).

The protein belongs to the prickle / espinas / testin family. Interacts via LIM domain 1 with ZYX. Interacts (via LIM domain 3) with ENAH and VASP. Interacts with ALKBH4, talin, actin, alpha-actinin, GRIP1 and PXN. Interacts (via LIM domain 2) with ACTL7A (via N-terminus). Heterodimer with ACTL7A; the heterodimer interacts with ENAH to form a heterotrimer.

It is found in the cytoplasm. It localises to the cell junction. The protein localises to the focal adhesion. Scaffold protein that may play a role in cell adhesion, cell spreading and in the reorganization of the actin cytoskeleton. Plays a role in the regulation of cell proliferation. May act as a tumor suppressor. This Nomascus leucogenys (Northern white-cheeked gibbon) protein is Testin (TES).